The following is a 527-amino-acid chain: V-set and immunoglobulin domain-containing protein 10 (527 aa).

A signal peptide spans 1–13 (MWTRRWIQFLVLC). Ig-like C2-type domains lie at 14–111 (LHLW…LKVS), 123–212 (PTRT…RQLL), 216–306 (PPIT…CQIQ), and 310–399 (PLLE…KEIN). Over 23–409 (YLGVFRGDVN…VWLTVNKPHN (387 aa)) the chain is Extracellular. 16 N-linked (GlcNAc...) asparagine glycosylation sites follow: Asn-32, Asn-41, Asn-52, Asn-64, Asn-74, Asn-90, Asn-129, Asn-139, Asn-191, Asn-206, Asn-226, Asn-260, Asn-276, Asn-325, Asn-346, and Asn-375. A disulfide bridge links Cys-144 with Cys-194. A disulfide bond links Cys-238 and Cys-288. A disulfide bridge connects residues Cys-330 and Cys-387. Residues 410 to 430 (IVGLVTALLLLFLLVVAIITG) form a helical membrane-spanning segment. Residues 431–527 (TVLYCDPQIY…TGEENQNEEI (97 aa)) are Cytoplasmic-facing. A disordered region spans residues 501–527 (RPPESTSSDLFSEVSDDTGEENQNEEI). A compositionally biased stretch (acidic residues) spans 514–527 (VSDDTGEENQNEEI).

Its subcellular location is the membrane. This chain is V-set and immunoglobulin domain-containing protein 10 (vsig10), found in Xenopus laevis (African clawed frog).